The primary structure comprises 394 residues: Potassium channel subfamily K member 3 (394 aa).

Residues 1–8 (MKRQNVRT) are Cytoplasmic-facing. Residues 9–29 (LALIVCTFTYLLVGAAVFDAL) form a helical membrane-spanning segment. An N-linked (GlcNAc...) asparagine glycan is attached at N53. Residues 78-101 (WRFAGSFYFAITVITTIGYGHAAP) constitute an intramembrane region (pore-forming). Positions 93, 94, 95, and 96 each coordinate K(+). The segment at 93 to 98 (TIGYGH) is selectivity filter 1. The helical transmembrane segment at 108-128 (VFCMFYALLGIPLTLVMFQSL) threads the bilayer. Topologically, residues 129 to 158 (GERINTLVRYLLHRAKKGLGMRRADVSMAN) are cytoplasmic. Residues 159-179 (MVLIGFFSCISTLCIGAAAFS) form a helical membrane-spanning segment. The pore-forming intramembrane region spans 184–207 (WTFFQAYYYCFITLTTIGFGDYVA). K(+) contacts are provided by T199, I200, G201, and F202. The segment at 199–204 (TIGFGD) is selectivity filter 2. The helical transmembrane segment at 223–243 (FSFVYILTGLTVIGAFLNLVV) threads the bilayer. The interval 243-248 (VLRFMT) is X-gate. Residues 244-394 (LRFMTMNAED…RGLMKRRSSV (151 aa)) lie on the Cytoplasmic side of the membrane. Disordered stretches follow at residues 266–286 (RNGQ…DTAS) and 338–357 (TCVE…SDTP). The span at 269-278 (QAGGGGGGGS) shows a compositional bias: gly residues.

It belongs to the two pore domain potassium channel (TC 1.A.1.8) family. In terms of assembly, homodimer. Heterodimer with KCNK1. Heterodimer with KCNK9. In terms of tissue distribution, widespread expression in adult. Strongest expression in pancreas and placenta. Lower expression in brain, lung, prostate, heart, kidney, uterus, small intestine and colon.

The protein resides in the cell membrane. The catalysed reaction is K(+)(in) = K(+)(out). It carries out the reaction Na(+)(in) = Na(+)(out). Its activity is regulated as follows. Inhibited by external acidification, diacylglycerol and anandamide. Activated by halothane and isoflurane. In terms of biological role, k(+) channel that conducts voltage-dependent outward rectifying currents upon membrane depolarization. Voltage sensing is coupled to K(+) electrochemical gradient in an 'ion flux gating' mode where outward but not inward ion flow opens the gate. Changes ion selectivity and becomes permeable to Na(+) ions in response to extracellular acidification. Protonation of the pH sensor His-98 stabilizes C-type inactivation conformation likely converting the channel from outward K(+)-conducting, to inward Na(+)-conducting to nonconductive state. Homo- and heterodimerizes to form functional channels with distinct regulatory and gating properties. Allows K(+) currents with fast-gating kinetics important for the repolarization and hyperpolarization phases of action potentials. In cerebellar granule cells, heteromeric KCNK3:KCNK9 channel may hyperpolarize the resting membrane potential to limit intrinsic neuronal excitability, but once the action potential threshold is reached, it may support high-frequency action potential firing and increased neuronal excitability. Dispensable for central chemosensory respiration i.e. breathing controlled by brainstem CO2/pH, it rather conducts pH-sensitive currents and controls the firing rate of serotonergic raphe neurons involved in potentiation of the respiratory chemoreflex. Additionally, imparts chemosensitivity to type 1 cells in carotid bodies which respond to a decrease in arterial oxygen pressure or an increase in carbon dioxide pressure or pH to initiate adaptive changes in pulmonary ventilation. In adrenal gland, contributes to the maintenance of a hyperpolarized resting membrane potential of aldosterone-producing cells at zona glomerulosa and limits aldosterone release as part of a regulatory mechanism that controls arterial blood pressure and electrolyte homeostasis. In brown adipocytes, mediates K(+) efflux that counteracts norepinephrine-induced membrane depolarization, limits Ca(2+) efflux and downstream cAMP and PKA signaling, ultimately attenuating lipid oxidation and adaptive thermogenesis. The protein is Potassium channel subfamily K member 3 of Homo sapiens (Human).